We begin with the raw amino-acid sequence, 399 residues long: MSDGDDAARRRTAAVTDYRKKLLHHKELESRVRTARENLRAAKKEFNKTEDDLKSLQSVGQIIGEVLRPLDNERLIVKASSGPRYVVGCRSKVDKEKLTSGTRVVLDMTTLTIMRALPREVDPVVYNMLHEDPGNISYSAVGGLGDQIRELRESIELPLMNPELFLRVGIKPPKGVLLYGPPGTGKTLLARAIASNIDANFLKVVSSAIIDKYIGESARLIREMFNYAREHQPCIIFMDEIDAIGGRRFSEGTSADREIQRTLMELLNQLDGFDQLGKVKMIMATNRPDVLDPALLRPGRLDRKIEIPLPNEQSRMEILKIHASGIAKHGEIDYEAIVKLGEGFNGADLRNICTEAGMFAIRAERDYVIHEDFMKAVRKLSEAKKLESSSHYNADFGKE.

ATP is bound at residue Gly-180–Thr-187. Lys-203 is covalently cross-linked (Glycyl lysine isopeptide (Lys-Gly) (interchain with G-Cter in ubiquitin)).

The protein belongs to the AAA ATPase family. Component of the 19S regulatory particle (RP/PA700) base subcomplex of the 26S proteasome. The 26S proteasome is composed of a core protease (CP), known as the 20S proteasome, capped at one or both ends by the 19S regulatory particle (RP/PA700). The RP/PA700 complex is composed of at least 17 different subunits in two subcomplexes, the base and the lid, which form the portions proximal and distal to the 20S proteolytic core, respectively.

Its subcellular location is the cytoplasm. It localises to the nucleus. Functionally, the 26S proteasome is involved in the ATP-dependent degradation of ubiquitinated proteins. The regulatory (or ATPase) complex confers ATP dependency and substrate specificity to the 26S complex. The polypeptide is 26S proteasome regulatory subunit S10B homolog B (RPT4B) (Arabidopsis thaliana (Mouse-ear cress)).